We begin with the raw amino-acid sequence, 256 residues long: Cytochrome c-type biogenesis protein CcmE homolog, mitochondrial (256 aa).

A mitochondrion-targeting transit peptide spans 1 to 57; it reads MAARLLFRRSSQILRSIQRNPQISSSFESPPCPIFHSLTTASPDPSRLSSLTFLRSL. Residues 84–106 form a helical membrane-spanning segment; sequence LWTYALTFSCIAGFVVIVLNQFQ. Heme is bound by residues His222 and Tyr226.

It belongs to the CcmE/CycJ family.

The protein localises to the mitochondrion inner membrane. It is found in the mitochondrion intermembrane space. Its function is as follows. Heme-binding chaperone that may be involved in cytochrome c maturation in mitochondria. The protein is Cytochrome c-type biogenesis protein CcmE homolog, mitochondrial of Arabidopsis thaliana (Mouse-ear cress).